Consider the following 344-residue polypeptide: Uroporphyrinogen decarboxylase (344 aa).

Substrate is bound by residues 23–27, D73, Y149, T204, and H321; that span reads RQAGR.

Belongs to the uroporphyrinogen decarboxylase family. Homodimer.

The protein localises to the cytoplasm. The enzyme catalyses uroporphyrinogen III + 4 H(+) = coproporphyrinogen III + 4 CO2. Its pathway is porphyrin-containing compound metabolism; protoporphyrin-IX biosynthesis; coproporphyrinogen-III from 5-aminolevulinate: step 4/4. Catalyzes the decarboxylation of four acetate groups of uroporphyrinogen-III to yield coproporphyrinogen-III. The sequence is that of Uroporphyrinogen decarboxylase from Francisella tularensis subsp. novicida (strain U112).